The primary structure comprises 279 residues: MKALDKIREIVNKFSFNIREAQEIICHVLKIDKIQLYTENPEITSEQAHTIKSLIERRLKKEPLQYIIGECYFYNIKIKVGRGVLIPRPETEILVEQVLERQKLISNTGNRILDLCTGSGCIALAIGKNAPEFQIFGIDKSEKAVKYATENKALNNIKNVIFLVGDMFNPFKEKIFACITANPPYVKTDEISKLQPEIKNYEPLEALNGGEDGLNFYRKIIENAEKYLLNSGLIFLEIGQGQAKAVQNIALMSGFNVIEVVKDIAGIDRVMILQKSKSL.

2 residues coordinate S-adenosyl-L-methionine: Asp-139 and Asn-182. A substrate-binding site is contributed by 182–185 (NPPY).

Belongs to the protein N5-glutamine methyltransferase family. PrmC subfamily.

The enzyme catalyses L-glutaminyl-[peptide chain release factor] + S-adenosyl-L-methionine = N(5)-methyl-L-glutaminyl-[peptide chain release factor] + S-adenosyl-L-homocysteine + H(+). Methylates the class 1 translation termination release factors RF1/PrfA and RF2/PrfB on the glutamine residue of the universally conserved GGQ motif. The protein is Release factor glutamine methyltransferase of Thermodesulfovibrio yellowstonii (strain ATCC 51303 / DSM 11347 / YP87).